Consider the following 435-residue polypeptide: MESIIALFQGMGIMHITLGQVIMIIVSLILLWLAIARRFEPLLLLPIGFGGLLSNIPEAGLAMTALDHLLHYAHTEQLTIIAEKVNSSSLDVHTIKQAIAFAPPSVQNELEVIASDLGYNAGILALFYKVAIGYGVAPLIIFMGVGAMTDFGPLLANPRTLLLGAAAQFGIFTTVLGALGLNWLGIIDFSLPQAAAIGIIGGADGPTAIYLASKLAPELLGAIAVAAYSYMALVPLIQPPIMKALTTEQERKIRMVQLRTVSAREKIVFPIVLLLLVALLLPDAAPLLGMFCFGNLMRASGVVERLNETAQNALINIVTIFLGLSVGAKLVADKFLQPQTLGILLLGIVAFAIGTASGVIMAKIMNAFSKHKINPLIGSAGVSAVPMAARVSNKIGLEADKQNFLLMHAMGPNVAGVISSAIAAGIMLKYISTMI.

9 helical membrane passes run 13-35 (IMHI…WLAI), 42-64 (LLLL…LAMT), 123-145 (ILAL…FMGV), 165-187 (AAAQ…LGII), 215-237 (LAPE…VPLI), 267-289 (IVFP…PLLG), 309-328 (TAQN…SVGA), 340-362 (TLGI…VIMA), and 404-426 (FLLM…AAGI).

Belongs to the GcdB/MmdB/OadB family. In terms of assembly, heterotrimer of an alpha, a beta and a gamma subunit. The cofactor is Na(+).

The protein localises to the cell membrane. It carries out the reaction oxaloacetate + 2 Na(+)(in) + H(+) = pyruvate + 2 Na(+)(out) + CO2. Functionally, catalyzes the decarboxylation of oxaloacetate coupled to Na(+) translocation. The polypeptide is Oxaloacetate decarboxylase beta chain (oadB) (Haemophilus ducreyi (strain 35000HP / ATCC 700724)).